We begin with the raw amino-acid sequence, 150 residues long: MSGWIATSKTRMQDFWSLLTFSSDLVDVKDSGDYPLTAPGLSWKKFQGSFCEFVGTLVCRCQYILLHDDFPMDNLISLLTGFSDSQVCAFCHTSTLAAMKLMTSLVRVALQLSLHEDINQRQYEAERNKGPGQRAPERLESLLEKHKELH.

It belongs to the SCC3 family.

The sequence is that of Putative STAG3-like protein 4 (STAG3L4) from Homo sapiens (Human).